The primary structure comprises 62 residues: Ferredoxin-3 (62 aa).

2 consecutive 4Fe-4S ferredoxin-type domains span residues 2–28 (SLKITEECTFCAACEPECPVNAISAGS) and 29–62 (DIYVIDESACTECEGYADSPACVAVCPAECIVKA). 8 residues coordinate [4Fe-4S] cluster: cysteine 9, cysteine 12, cysteine 15, cysteine 19, cysteine 38, cysteine 41, cysteine 50, and cysteine 54.

Requires [4Fe-4S] cluster as cofactor.

In terms of biological role, ferredoxins are iron-sulfur proteins that transfer electrons in a wide variety of metabolic reactions. In Chlorobaculum tepidum (strain ATCC 49652 / DSM 12025 / NBRC 103806 / TLS) (Chlorobium tepidum), this protein is Ferredoxin-3.